Reading from the N-terminus, the 511-residue chain is Bifunctional purine biosynthesis protein PurH (511 aa).

The MGS-like domain maps to 1–145; sequence MKKRALVSVS…KNHKFVSVIV (145 aa).

This sequence belongs to the PurH family.

It catalyses the reaction (6R)-10-formyltetrahydrofolate + 5-amino-1-(5-phospho-beta-D-ribosyl)imidazole-4-carboxamide = 5-formamido-1-(5-phospho-D-ribosyl)imidazole-4-carboxamide + (6S)-5,6,7,8-tetrahydrofolate. The enzyme catalyses IMP + H2O = 5-formamido-1-(5-phospho-D-ribosyl)imidazole-4-carboxamide. Its pathway is purine metabolism; IMP biosynthesis via de novo pathway; 5-formamido-1-(5-phospho-D-ribosyl)imidazole-4-carboxamide from 5-amino-1-(5-phospho-D-ribosyl)imidazole-4-carboxamide (10-formyl THF route): step 1/1. It functions in the pathway purine metabolism; IMP biosynthesis via de novo pathway; IMP from 5-formamido-1-(5-phospho-D-ribosyl)imidazole-4-carboxamide: step 1/1. This chain is Bifunctional purine biosynthesis protein PurH, found in Bacillus cereus (strain ATCC 14579 / DSM 31 / CCUG 7414 / JCM 2152 / NBRC 15305 / NCIMB 9373 / NCTC 2599 / NRRL B-3711).